Consider the following 467-residue polypeptide: MLKSAVYSILAASLVNAGTIPLGKLSDIDKIGTQTEIFPFLGGSGPYYSFPGDYGISRDLPESCEMKQVQMVGRHGERYPTVSKAKSIMTTWYKLSNYTGQFSGALSFLNDDYEFFIRDTKNLEMETTLANSVNVLNPYTGEMNAKRHARDFLAQYGYMVENQTSFAVFTSNSNRCHDTAQYFIDGLGDKFNISLQTISEAESAGANTLSAHHSCPAWDDDVNDDILKKYDTKYLSGIAKRLNKENKGLNLTSSDANTFFAWCAYEINARGYSDICNIFTKDELVRFSYGQDLETYYQTGPGYDVVRSVGANLFNASVKLLKESEVQDQKVWLSFTHDTDILNYLTTIGIIDDKNNLTAEHVPFMENTFHRSWYVPQGARVYTEKFQCSNDTYVRYVINDAVVPIETCSTGPGFSCEINDFYDYAEKRVAGTDFLKVCNVSSVSNSTELTFFWDWNTKHYNDTLLKQ.

Residues 1 to 17 (MLKSAVYSILAASLVNA) form the signal peptide. Histidine 75 serves as the catalytic Nucleophile. N-linked (GlcNAc...) asparagine glycans are attached at residues asparagine 97, asparagine 162, asparagine 192, asparagine 250, and asparagine 315. The Proton donor role is filled by aspartate 338. N-linked (GlcNAc...) asparagine glycosylation is found at asparagine 356, asparagine 390, asparagine 439, asparagine 445, and asparagine 461.

The protein belongs to the histidine acid phosphatase family. In terms of processing, glycosylated during secretion across the membrane.

The catalysed reaction is a phosphate monoester + H2O = an alcohol + phosphate. This chain is Acid phosphatase PHO11 (PHO11), found in Saccharomyces cerevisiae (strain ATCC 204508 / S288c) (Baker's yeast).